A 147-amino-acid chain; its full sequence is Small ribosomal subunit protein uS5 (147 aa).

The S5 DRBM domain maps to Phe-9 to Val-72.

Belongs to the universal ribosomal protein uS5 family. As to quaternary structure, part of the 30S ribosomal subunit. Contacts proteins S4 and S8.

With S4 and S12 plays an important role in translational accuracy. Functionally, located at the back of the 30S subunit body where it stabilizes the conformation of the head with respect to the body. The sequence is that of Small ribosomal subunit protein uS5 from Campylobacter concisus (strain 13826).